Here is a 199-residue protein sequence, read N- to C-terminus: Recombination protein RecR (199 aa).

The segment at Cys57–Cys72 adopts a C4-type zinc-finger fold. One can recognise a Toprim domain in the interval Ser80 to Ser176.

It belongs to the RecR family.

Functionally, may play a role in DNA repair. It seems to be involved in an RecBC-independent recombinational process of DNA repair. It may act with RecF and RecO. In Limosilactobacillus fermentum (strain NBRC 3956 / LMG 18251) (Lactobacillus fermentum), this protein is Recombination protein RecR.